A 217-amino-acid polypeptide reads, in one-letter code: Small ribosomal subunit protein uS3 (217 aa).

Residues 38–106 (IRKFIDNELK…KVHINVIEIK (69 aa)) form the KH type-2 domain.

The protein belongs to the universal ribosomal protein uS3 family. As to quaternary structure, part of the 30S ribosomal subunit. Forms a tight complex with proteins S10 and S14.

In terms of biological role, binds the lower part of the 30S subunit head. Binds mRNA in the 70S ribosome, positioning it for translation. The protein is Small ribosomal subunit protein uS3 of Staphylococcus haemolyticus (strain JCSC1435).